A 299-amino-acid chain; its full sequence is NAD kinase (299 aa).

Catalysis depends on Asp-75, which acts as the Proton acceptor. NAD(+) is bound by residues Asp-75 to Gly-76, Asn-149 to Asp-150, Arg-177, Asp-179, Thr-190 to Ser-195, Ala-214, and Gln-248.

The protein belongs to the NAD kinase family. A divalent metal cation serves as cofactor.

Its subcellular location is the cytoplasm. The enzyme catalyses NAD(+) + ATP = ADP + NADP(+) + H(+). Functionally, involved in the regulation of the intracellular balance of NAD and NADP, and is a key enzyme in the biosynthesis of NADP. Catalyzes specifically the phosphorylation on 2'-hydroxyl of the adenosine moiety of NAD to yield NADP. The sequence is that of NAD kinase from Burkholderia thailandensis (strain ATCC 700388 / DSM 13276 / CCUG 48851 / CIP 106301 / E264).